We begin with the raw amino-acid sequence, 629 residues long: Chaperone protein HtpG (629 aa).

The segment at 1–336 (MSSTENNGTA…TEDLSLNVSR (336 aa)) is a; substrate-binding. The tract at residues 337 to 549 (EMVQSSPVMA…KDAIDSQLER (213 aa)) is b. Residues 550 to 629 (MMKMMNTPMP…ELIEAATLTR (80 aa)) are c.

It belongs to the heat shock protein 90 family. In terms of assembly, homodimer.

Its subcellular location is the cytoplasm. Its function is as follows. Molecular chaperone. Has ATPase activity. The protein is Chaperone protein HtpG of Chlorobium chlorochromatii (strain CaD3).